Here is a 542-residue protein sequence, read N- to C-terminus: Organic anion transporter 3 (542 aa).

The Cytoplasmic segment spans residues 1 to 9; sequence MTFSEILDR. Ser-4 is subject to Phosphoserine. Residues 10–30 form a helical membrane-spanning segment; sequence VGSMGPFQFLHVALLGFPILG. Topologically, residues 31 to 123 are extracellular; sequence MANHNLLQIF…LVCSSNKLKE (93 aa). Asn-86 is a glycosylation site (N-linked (GlcNAc...) asparagine). The helical transmembrane segment at 124 to 144 threads the bilayer; sequence MAQSIFMAGILIGGLVLGDLS. Over 145 to 150 the chain is Cytoplasmic; that stretch reads DRFGRK. A helical transmembrane segment spans residues 151–171; the sequence is PILTCCYLLLAASGSSTAFSP. Topologically, residues 172-176 are extracellular; sequence TLPIY. The helical transmembrane segment at 177–197 threads the bilayer; it reads MVFRFLCGFSISGISLSTVIL. The Cytoplasmic portion of the chain corresponds to 198–212; that stretch reads NVEWVPTKMRAITST. Residues 213-233 form a helical membrane-spanning segment; that stretch reads AIGYCYTIGQFILPGLAYAIP. Residues 234-236 are Extracellular-facing; the sequence is QWR. The helical transmembrane segment at 237–257 threads the bilayer; the sequence is WLQLTVSVPYFIFSLLSWWIP. The Cytoplasmic portion of the chain corresponds to 258–327; that stretch reads ESIRWLVLAG…FRTPILRRVT (70 aa). Residues 328–348 form a helical membrane-spanning segment; the sequence is LCLSLAWFATGFAYYSLAMGV. Topologically, residues 349–354 are extracellular; that stretch reads EEFGVN. The helical transmembrane segment at 355–375 threads the bilayer; the sequence is IYILQIIFGGVDIPAKFITIL. The Cytoplasmic portion of the chain corresponds to 376–389; the sequence is SLSYLGRHITQGAA. The chain crosses the membrane as a helical span at residues 390–410; that stretch reads LILAGAAILSLIFVPMDMSLL. A topological domain (extracellular) is located at residue Arg-411. The helical transmembrane segment at 412 to 432 threads the bilayer; that stretch reads TILAVFGKGCLSGSFSCLFLY. The Cytoplasmic segment spans residues 433–471; that stretch reads TSELFPTVIRQTGMGISNVWARVGSMISPLVKITGEIQP. Residues 472–492 traverse the membrane as a helical segment; the sequence is FIPNIIYGTVALLGGSAALFL. Residues 493–542 lie on the Extracellular side of the membrane; it reads PETLNQPLPETLEDMENWFLQSKKLKQEPEAEKASQRIPLQPSGPGVDRS. Residues 518 to 527 show a composition bias toward basic and acidic residues; sequence KQEPEAEKAS. Positions 518–542 are disordered; it reads KQEPEAEKASQRIPLQPSGPGVDRS.

This sequence belongs to the major facilitator (TC 2.A.1) superfamily. Organic cation transporter (TC 2.A.1.19) family.

It localises to the basolateral cell membrane. The enzyme catalyses estrone 3-sulfate(out) + glutarate(in) = estrone 3-sulfate(in) + glutarate(out). It carries out the reaction estrone 3-sulfate(in) + 2-oxoglutarate(out) = estrone 3-sulfate(out) + 2-oxoglutarate(in). It catalyses the reaction glutarate(in) + 2-oxoglutarate(out) = glutarate(out) + 2-oxoglutarate(in). The catalysed reaction is urate(in) + 2-oxoglutarate(out) = urate(out) + 2-oxoglutarate(in). The enzyme catalyses taurocholate(out) + glutarate(in) = taurocholate(in) + glutarate(out). It carries out the reaction dehydroepiandrosterone 3-sulfate(out) + glutarate(in) = dehydroepiandrosterone 3-sulfate(in) + glutarate(out). It catalyses the reaction prostaglandin F2alpha(out) + glutarate(in) = prostaglandin F2alpha(in) + glutarate(out). The catalysed reaction is prostaglandin F2alpha(out) + 2-oxoglutarate(in) = prostaglandin F2alpha(in) + 2-oxoglutarate(out). The enzyme catalyses (R)-carnitine(out) + 2-oxoglutarate(in) = (R)-carnitine(in) + 2-oxoglutarate(out). It carries out the reaction glutarate(in) + (R)-carnitine(out) = glutarate(out) + (R)-carnitine(in). It catalyses the reaction prostaglandin E2(out) + 2-oxoglutarate(in) = prostaglandin E2(in) + 2-oxoglutarate(out). The catalysed reaction is prostaglandin E2(out) + glutarate(in) = prostaglandin E2(in) + glutarate(out). The enzyme catalyses urate(in) + glutarate(out) = urate(out) + glutarate(in). It carries out the reaction taurocholate(out) + 2-oxoglutarate(in) = taurocholate(in) + 2-oxoglutarate(out). It catalyses the reaction dehydroepiandrosterone 3-sulfate(out) + 2-oxoglutarate(in) = dehydroepiandrosterone 3-sulfate(in) + 2-oxoglutarate(out). The catalysed reaction is kynurenate(out) + a dicarboxylate(in) = kynurenate(in) + a dicarboxylate(out). The enzyme catalyses (indol-3-yl)acetate(out) + a dicarboxylate(in) = (indol-3-yl)acetate(in) + a dicarboxylate(out). It carries out the reaction indoxyl sulfate(out) + a dicarboxylate(in) = indoxyl sulfate(in) + a dicarboxylate(out). It catalyses the reaction N-benzoylglycine(out) + a dicarboxylate(in) = N-benzoylglycine(in) + a dicarboxylate(out). The catalysed reaction is 3-carboxy-4-methyl-5-propyl-2-furanpropanoate(out) + a dicarboxylate(in) = 3-carboxy-4-methyl-5-propyl-2-furanpropanoate(in) + a dicarboxylate(out). The enzyme catalyses (6R)-L-erythro-5,6,7,8-tetrahydrobiopterin(out) + a dicarboxylate(in) = (6R)-L-erythro-5,6,7,8-tetrahydrobiopterin(in) + a dicarboxylate(out). It carries out the reaction L-erythro-7,8-dihydrobiopterin(out) + a dicarboxylate(in) = L-erythro-7,8-dihydrobiopterin(in) + a dicarboxylate(out). It catalyses the reaction L-sepiapterin(out) + a dicarboxylate(in) = L-sepiapterin(in) + a dicarboxylate(out). Functionally, functions as an organic anion/dicarboxylate exchanger that couples organic anion uptake indirectly to the sodium gradient. Transports organic anions such as estrone 3-sulfate (E1S) and urate in exchange for dicarboxylates such as glutarate or ketoglutarate (2-oxoglutarate). Plays an important role in the excretion of endogenous and exogenous organic anions, especially from the kidney and the brain. E1S transport is pH- and chloride-dependent and may also involve E1S/cGMP exchange. Responsible for the transport of prostaglandin E2 (PGE2) and prostaglandin F2(alpha) (PGF2(alpha)) in the basolateral side of the renal tubule. Involved in the transport of neuroactive tryptophan metabolites kynurenate and xanthurenate. Functions as a biopterin transporters involved in the uptake and the secretion of coenzymes tetrahydrobiopterin (BH4), dihydrobiopterin (BH2) and sepiapterin to urine, thereby determining baseline levels of blood biopterins. May be involved in the basolateral transport of steviol, a metabolite of the popular sugar substitute stevioside. May participate in the detoxification/ renal excretion of drugs and xenobiotics, such as the histamine H(2)-receptor antagonists fexofenadine and cimetidine, the antibiotic benzylpenicillin (PCG), the anionic herbicide 2,4-dichloro-phenoxyacetate (2,4-D), the diagnostic agent p-aminohippurate (PAH), the antiviral acyclovir (ACV), and the mycotoxin ochratoxin (OTA), by transporting these exogenous organic anions across the cell membrane in exchange for dicarboxylates such as 2-oxoglutarate. Contributes to the renal uptake of potent uremic toxins (indoxyl sulfate (IS), indole acetate (IA), hippurate/N-benzoylglycine (HA) and 3-carboxy-4-methyl-5-propyl-2-furanpropionate (CMPF)), pravastatin, PCG, E1S and dehydroepiandrosterone sulfate (DHEAS), and is partly involved in the renal uptake of temocaprilat (an angiotensin-converting enzyme (ACE) inhibitor). May contribute to the release of cortisol in the adrenals. Involved in one of the detoxification systems on the choroid plexus (CP), removes substrates such as E1S or taurocholate (TC), PCG, 2,4-D and PAH, from the cerebrospinal fluid (CSF) to the blood for eventual excretion in urine and bile. Also contributes to the uptake of several other organic compounds such as the prostanoids prostaglandin E(2) and prostaglandin F(2-alpha), L-carnitine, and the therapeutic drugs allopurinol, 6-mercaptopurine (6-MP) and 5-fluorouracil (5-FU). Mediates the transport of PAH, PCG, and the statins pravastatin and pitavastatin, from the cerebrum into the blood circulation across the blood-brain barrier (BBB). In summary, plays a role in the efflux of drugs and xenobiotics, helping reduce their undesired toxicological effects on the body. This is Organic anion transporter 3 (SLC22A8) from Oryctolagus cuniculus (Rabbit).